The sequence spans 334 residues: B1 bradykinin receptor (334 aa).

The interval 1–21 (MASQASLKLQPSNQSQQAPPN) is disordered. Over 1-41 (MASQASLKLQPSNQSQQAPPNITSCEGAPEAWDLLCRVLPG) the chain is Extracellular. The span at 10–21 (QPSNQSQQAPPN) shows a compositional bias: low complexity. N-linked (GlcNAc...) asparagine glycans are attached at residues asparagine 13 and asparagine 21. A helical transmembrane segment spans residues 42-62 (FVITVCFFGLLGNLLVLSFFL). Residues 63–80 (LPWRRWWQQRRQRLTIAE) are Cytoplasmic-facing. Residues 81–101 (IYLANLAASDLVFVLGLPFWA) form a helical membrane-spanning segment. The Extracellular portion of the chain corresponds to 102 to 118 (ENVGNRFNWPFGSDLCR). Cysteine 117 and cysteine 196 are oxidised to a cystine. The chain crosses the membrane as a helical span at residues 119-139 (VVSGVIKANLFISIFLVVAIS). The Cytoplasmic portion of the chain corresponds to 140-161 (QDRYRLLVYPMTSWGNRRRRQA). Residues 162–182 (QVTCLLIWVAGGLLSTPTFLL) traverse the membrane as a helical segment. The Extracellular portion of the chain corresponds to 183 to 214 (RSVKVVPDLNISACILLFPHEAWHFVRMVELN). The N-linked (GlcNAc...) asparagine glycan is linked to asparagine 192. A helical membrane pass occupies residues 215–235 (VLGFLLPLAAILYFNFHILAS). The Cytoplasmic portion of the chain corresponds to 236-258 (LRGQKEASRTRCGGPKDSKTMGL). Residues 259–279 (ILTLVASFLVCWAPYHFFAFL) traverse the membrane as a helical segment. The Extracellular segment spans residues 280-302 (DFLVQVRVIQDCFWKELTDLGLQ). A helical transmembrane segment spans residues 303–323 (LANFFAFVNSCLNPLIYVFAG). The Cytoplasmic portion of the chain corresponds to 324–334 (RLFKTRVLGTL).

It belongs to the G-protein coupled receptor 1 family. Bradykinin receptor subfamily. BDKRB1 sub-subfamily. As to expression, expressed in heart, liver and lung.

It is found in the cell membrane. Its function is as follows. This is a receptor for bradykinin. Could be a factor in chronic pain and inflammation. In Mus musculus (Mouse), this protein is B1 bradykinin receptor (Bdkrb1).